A 271-amino-acid chain; its full sequence is Transcription factor PU.1 (271 aa).

The disordered stretch occupies residues 124–164 (LSPAHQQSSDEEEGERQSPPLEVSDGEADGLEPGPGLLHGE). 2 positions are modified to phosphoserine: Ser-141 and Ser-147. The segment covering 154-164 (LEPGPGLLHGE) has biased composition (low complexity). Positions 171–254 (IRLYQFLLDL…VKKKLTYQFS (84 aa)) form a DNA-binding region, ETS. Positions 218, 231, 234, and 244 each coordinate DNA.

It belongs to the ETS family. As to quaternary structure, binds DNA as a monomer. Can form homomers. Directly interacts with CEBPD/NF-IL6-beta; this interaction does not affect DNA-binding properties of each partner. Interacts with NONO/p54(nrb). Interacts with RUNX1/AML1. Interacts with GFI1; the interaction represses SPI1 transcriptional activity, hence blocks SPI1-induced macrophage differentiation of myeloid progenitor cells. Interacts with CEBPE. Interacts with IRF4/Pip and IRF8. Interacts with JUN. Interacts with RB1. Interacts with TBP.

Its subcellular location is the nucleus. Transcriptional activity at macrophage-specific genes is inhibited by interaction with GFI1, which results in the inhibition of SPI1-induced macrophage differentiation of myeloid progenitor cells, but not that of the granulocyte lineage. Pioneer transcription factor, which controls hematopoietic cell fate by decompacting stem cell heterochromatin and allowing other transcription factors to enter otherwise inaccessible genomic sites. Once in open chromatin, can directly control gene expression by binding genetic regulatory elements and can also more broadly influence transcription by recruiting transcription factors, such as interferon regulatory factors (IRFs), to otherwise inaccessible genomic regions. Transcriptionally activates genes important for myeloid and lymphoid lineages, such as CSF1R or FCER1A. Transcriptional activation from certain promoters, possibly containing low affinity binding sites, is achieved cooperatively with other transcription factors. FCER1A transactivation is achieved in cooperation with GATA1. May be particularly important for the pro- to pre-B cell transition. Binds (via the ETS domain) onto the purine-rich DNA core sequence 5'-GAGGAA-3', also known as the PU-box. In vitro can bind RNA and interfere with pre-mRNA splicing. This chain is Transcription factor PU.1 (Spi1), found in Rattus norvegicus (Rat).